The sequence spans 751 residues: Ecdysteroid-phosphate phosphatase (751 aa).

Residues C16–H60 form the UBA domain. The region spanning A271–E336 is the SH3 domain. Disordered stretches follow at residues G367–S394 and E458–L484. A compositionally biased stretch (basic and acidic residues) spans R466–L479. The tract at residues K490 to T751 is phosphatase-like. Residue R498 is part of the active site. The active-site Tele-phosphohistidine intermediate is the H499. The active site involves H681.

Its subcellular location is the cytoplasm. It localises to the cytosol. The protein resides in the nucleus. It carries out the reaction ecdysone 22-phosphate + H2O = ecdysone + phosphate. The catalysed reaction is 20-hydroxyecdysone 22-phosphate + H2O = 20-hydroxyecdysone + phosphate. The enzyme catalyses 2-deoxyecdysone 22-phosphate + H2O = 2-deoxyecdysone + phosphate. In terms of biological role, steroid phosphatase that dephosphorylates ecdysteroids such as ecdysone 22-phosphate (E22P), 3-epi-ecdysone 22-phosphate (E22P) and 3-epi-ecdysone 2-phosphate (E2P). Likely catalyzes the conversion of inactive phosphorylated ecdysteroids into their active forms. Shows high activity towards ecdysone 22-phosphate (E22P), but is also significantly active against 3-epi-ecdysone 22-phosphate (E22P) and 3-epi-ecdysone 2-phosphate (E2P). Also displays acid phosphatase activity towards 4-nitrophenyl phosphate (pNNP) in vitro. Has no activity towards 3-epi-ecdysone 3-phosphate (E3P). The sequence is that of Ecdysteroid-phosphate phosphatase from Drosophila melanogaster (Fruit fly).